Consider the following 801-residue polypeptide: Probable inorganic carbon transporter subunit DabA (801 aa).

C298, D300, H481, and C496 together coordinate Zn(2+). A disordered region spans residues 575-596 (RENAAAERAESMGSDASSGVSE).

The protein belongs to the inorganic carbon transporter (TC 9.A.2) DabA family. In terms of assembly, forms a complex with DabB. Requires Zn(2+) as cofactor.

It is found in the cell membrane. Part of an energy-coupled inorganic carbon pump. This chain is Probable inorganic carbon transporter subunit DabA, found in Haloarcula marismortui (strain ATCC 43049 / DSM 3752 / JCM 8966 / VKM B-1809) (Halobacterium marismortui).